Here is a 429-residue protein sequence, read N- to C-terminus: Argininosuccinate lyase (429 aa).

This sequence belongs to the lyase 1 family. Argininosuccinate lyase subfamily.

Its subcellular location is the cytoplasm. The catalysed reaction is 2-(N(omega)-L-arginino)succinate = fumarate + L-arginine. It functions in the pathway amino-acid biosynthesis; L-arginine biosynthesis; L-arginine from L-ornithine and carbamoyl phosphate: step 3/3. This Pyrobaculum islandicum (strain DSM 4184 / JCM 9189 / GEO3) protein is Argininosuccinate lyase.